The sequence spans 637 residues: Extracellular metalloproteinase 10 (637 aa).

A signal peptide spans 1–19; that stretch reads MHGLLLAATLLSLPFNAVA. Positions 20–245 are excised as a propeptide; it reads HVPPTTGLVR…VHNVVDYVAH (226 aa). The N-linked (GlcNAc...) asparagine glycan is linked to N282. A Zn(2+)-binding site is contributed by H429. E430 is a catalytic residue. Residue H433 participates in Zn(2+) binding. N502 carries an N-linked (GlcNAc...) asparagine glycan.

This sequence belongs to the peptidase M36 family. It depends on Zn(2+) as a cofactor.

Its subcellular location is the secreted. Functionally, secreted metalloproteinase that allows assimilation of proteinaceous substrates. The polypeptide is Extracellular metalloproteinase 10 (MEP10) (Uncinocarpus reesii (strain UAMH 1704)).